Here is a 150-residue protein sequence, read N- to C-terminus: uncharacterized protein (150 aa).

Residues 1–133 (MNDILREIGM…ISALLHRVRK (133 aa)) form the HTH marR-type domain. Residues 47–70 (QEKLAEMIKVDRTTAARAIKKLEM) constitute a DNA-binding region (H-T-H motif).

This is an uncharacterized protein from Bacillus subtilis (strain 168).